The sequence spans 482 residues: Exodeoxyribonuclease I (482 aa).

The 182-residue stretch at leucine 13–leucine 194 folds into the Exonuclease domain. The Mg(2+) site is built by aspartate 16, glutamate 18, and aspartate 187. Glutamate 18 is a binding site for substrate. In terms of domain architecture, ExoI SH3-like spans proline 203 to asparagine 351. The ExoI C-terminal domain occupies asparagine 355–tyrosine 471.

As to quaternary structure, monomer. Interacts with ssb (via C-terminus); this interaction stimulates the exonuclease activity by recruiting the enzyme to its substrate. It depends on Mg(2+) as a cofactor.

It carries out the reaction Exonucleolytic cleavage in the 3'- to 5'-direction to yield nucleoside 5'-phosphates.. In terms of biological role, degrades single-stranded DNA (ssDNA) in a highly processive manner. Also functions as a DNA deoxyribophosphodiesterase that releases deoxyribose-phosphate moieties following the cleavage of DNA at an apurinic/apyrimidinic (AP) site by either an AP endonuclease or AP lyase. This is Exodeoxyribonuclease I (sbcB) from Buchnera aphidicola subsp. Schizaphis graminum (strain Sg).